Reading from the N-terminus, the 102-residue chain is Small ribosomal subunit protein uS10 (102 aa).

Positions 33–59 are disordered; it reads RMSGPIPLPTKRIRITTRKSPDGEGSA.

The protein belongs to the universal ribosomal protein uS10 family. In terms of assembly, part of the 30S ribosomal subunit.

Functionally, involved in the binding of tRNA to the ribosomes. The polypeptide is Small ribosomal subunit protein uS10 (Pyrococcus furiosus (strain ATCC 43587 / DSM 3638 / JCM 8422 / Vc1)).